Here is a 266-residue protein sequence, read N- to C-terminus: ATP synthase subunit a (266 aa).

A run of 6 helical transmembrane segments spans residues 38-58 (KQML…LLAA), 99-119 (LLFS…IPLI), 126-146 (HVGG…AIGV), 162-182 (GVPV…NFLV), 191-211 (LFAT…GIEY), and 224-244 (SVLV…IMAL).

Belongs to the ATPase A chain family. In terms of assembly, F-type ATPases have 2 components, CF(1) - the catalytic core - and CF(0) - the membrane proton channel. CF(1) has five subunits: alpha(3), beta(3), gamma(1), delta(1), epsilon(1). CF(0) has three main subunits: a(1), b(2) and c(9-12). The alpha and beta chains form an alternating ring which encloses part of the gamma chain. CF(1) is attached to CF(0) by a central stalk formed by the gamma and epsilon chains, while a peripheral stalk is formed by the delta and b chains.

The protein localises to the cell membrane. In terms of biological role, key component of the proton channel; it plays a direct role in the translocation of protons across the membrane. The sequence is that of ATP synthase subunit a from Arthrobacter sp. (strain FB24).